A 146-amino-acid chain; its full sequence is 3-hydroxyacyl-[acyl-carrier-protein] dehydratase FabZ (146 aa).

The active site involves His47.

The protein belongs to the thioester dehydratase family. FabZ subfamily.

It localises to the cytoplasm. It carries out the reaction a (3R)-hydroxyacyl-[ACP] = a (2E)-enoyl-[ACP] + H2O. Functionally, involved in unsaturated fatty acids biosynthesis. Catalyzes the dehydration of short chain beta-hydroxyacyl-ACPs and long chain saturated and unsaturated beta-hydroxyacyl-ACPs. This Methylococcus capsulatus (strain ATCC 33009 / NCIMB 11132 / Bath) protein is 3-hydroxyacyl-[acyl-carrier-protein] dehydratase FabZ.